The primary structure comprises 1349 residues: Elongator complex protein 1 (1349 aa).

Ser529, Ser539, Ser551, Ser636, and Ser828 each carry phosphoserine. Positions Gln919–Phe1349 are mediates dimerization. A phosphoserine; by HRR25 mark is found at Ser1198 and Ser1202. Phosphoserine occurs at positions 1205 and 1209. The segment covering Tyr1214 to Arg1228 has biased composition (low complexity). The tract at residues Tyr1214–Lys1245 is disordered. The required for binding to tRNA stretch occupies residues Arg1228–Lys1246.

The protein belongs to the ELP1/IKA1 family. As to quaternary structure, homodimer; dimerization promotes ELP1/IKI3 stability and elongator complex formation. Component of the elongator complex which consists of ELP1/IKI3, ELP2, ELP3, ELP4, ELP5/IKI1 and ELP6. The elongator complex is composed of two copies of the Elp123 subcomplex (composed of ELP1/IKI3, ELP2 and ELP3) and two copies of the Elp456 subcomplex (composed of ELP4, ELP5/IKI1 and ELP6). The Elp123 subcomplex forms a two-lobed scaffold, which binds the Elp456 subcomplex asymmetrically. In the complex, ELP1/IKI3 interacts with ELP2. In each lobe, ELP2 is tightly sandwiched between ELP1/IKI3 and ELP3. The Elp123 subcomplex binds tRNA through ELP1/IKI3 and ELP3 and can bind 2 tRNAs simultaneously. tRNA-binding induces conformational rearrangements which precisely position the targeted anticodon base in the active site. The Elp456 subcomplex binds tRNA and has ATPase activity. ELP1/IKI3 interacts with HRR25 and KTI12. Interacts with KTI11/DPH3. Post-translationally, phosphorylation promotes the tRNA modification function of the elongator complex.

It localises to the cytoplasm. Its subcellular location is the nucleus. Its pathway is tRNA modification; 5-methoxycarbonylmethyl-2-thiouridine-tRNA biosynthesis. Its function is as follows. Component of the elongator complex which is required for multiple tRNA modifications, including mcm5U (5-methoxycarbonylmethyl uridine), mcm5s2U (5-methoxycarbonylmethyl-2-thiouridine), and ncm5U (5-carbamoylmethyl uridine). The elongator complex catalyzes formation of carboxymethyluridine in the wobble base at position 34 in tRNAs. Functions as a gamma-toxin target (TOT); disruption of the complex confers resistance to Kluyveromyces lactis toxin zymocin (pGKL1 killer toxin). May also be involved in sensitivity to Pichia inositovora toxin. ELP1/IKI3 binds to tRNA, mediating interaction of the elongator complex with tRNA. Independently, may be involved in polarized exocytosis. This Saccharomyces cerevisiae (strain ATCC 204508 / S288c) (Baker's yeast) protein is Elongator complex protein 1 (IKI3).